The following is a 478-amino-acid chain: Glutamate--tRNA ligase (478 aa).

The short motif at 9 to 19 (PSPTGLLHIGT) is the 'HIGH' region element. The 'KMSKS' region signature appears at 248–252 (KLSKR). Lys-251 is an ATP binding site.

This sequence belongs to the class-I aminoacyl-tRNA synthetase family. Glutamate--tRNA ligase type 1 subfamily. In terms of assembly, monomer.

Its subcellular location is the cytoplasm. It carries out the reaction tRNA(Glu) + L-glutamate + ATP = L-glutamyl-tRNA(Glu) + AMP + diphosphate. Catalyzes the attachment of glutamate to tRNA(Glu) in a two-step reaction: glutamate is first activated by ATP to form Glu-AMP and then transferred to the acceptor end of tRNA(Glu). This Prochlorococcus marinus (strain MIT 9515) protein is Glutamate--tRNA ligase.